The chain runs to 21 residues: S-layer protein 2 (21 aa).

The protein resides in the secreted. It is found in the cell wall. It localises to the S-layer. Its function is as follows. The S-layer is a paracrystalline mono-layered assembly of proteins which coat the surface of bacteria. This is S-layer protein 2 from Bacillus thuringiensis subsp. konkukian.